The following is a 162-amino-acid chain: Tripartite terminase subunit 2 (162 aa).

The interval 1 to 58 (MYGRSNAPGCQPPVRAHPPSSPMTSRLQLAAMEQNASDAALSGMQQARSRQASPKRLR) is disordered. The span at 43 to 52 (GMQQARSRQA) shows a compositional bias: polar residues.

Belongs to the herpesviridae TRM2 protein family. Associates with TRM1 and TRM3 to form the tripartite terminase complex.

The protein resides in the host nucleus. Its function is as follows. Component of the molecular motor that translocates viral genomic DNA in empty capsid during DNA packaging. Forms a tripartite terminase complex together with TRM1 and TRM3 in the host cytoplasm. Once the complex reaches the host nucleus, it interacts with the capsid portal vertex. This portal forms a ring in which genomic DNA is translocated into the capsid. In Equine herpesvirus 1 (strain Ab4p) (EHV-1), this protein is Tripartite terminase subunit 2.